Consider the following 541-residue polypeptide: Protein wntless homolog A (541 aa).

The N-terminal stretch at 1–28 (MAGAIIENMSTKKLCMVGVALLLLQVLA) is a signal peptide. At 29–232 (FLVGGLIAPK…SIFQNGGFTM (204 aa)) the chain is on the lumenal side. Residues 233–253 (VWFAMKTFLTPSIIIIMIWYW) form a helical membrane-spanning segment. Residues 254 to 268 (RRITMMTRSPVLLEK) are Cytoplasmic-facing. The chain crosses the membrane as a helical span at residues 269–289 (VIFALGFSMTFINIPVEWFSI). Over 290 to 303 (GYDWTWMLLFGDIR) the chain is Lumenal. Residues 304 to 324 (QGIFYAMLLSFWIIFCGEHMM) form a helical membrane-spanning segment. Residues 325 to 331 (DQTERNR) are Cytoplasmic-facing. A helical membrane pass occupies residues 332-352 (ISVYWKQVGPIAFGSCCLFIF). Residues 353–379 (DMCERGVQLKNPFYSIWTTDVGAEIAM) lie on the Lumenal side of the membrane. Residues 380–400 (AFIIVAGICACLYFLFLCFMV) traverse the membrane as a helical segment. Residues 401 to 431 (YQVFRNISGKQSNLPAMTKARRLHYEGLIFR) are Cytoplasmic-facing. Residues 432-452 (FKFLMIITLACAALTIVFFIT) form a helical membrane-spanning segment. The Lumenal portion of the chain corresponds to 453–471 (TQITEGNWKLGDLSIELNS). Residues 472 to 492 (AFFTGVYGMWNLYVFALMFLY) form a helical membrane-spanning segment. The Cytoplasmic portion of the chain corresponds to 493–541 (APSHKHYGDGQSNDGAGMSSGEELQLTTTITHIDGPTEVYRLAGKEAQE).

The protein belongs to the wntless family.

The protein resides in the golgi apparatus membrane. Its subcellular location is the cytoplasmic vesicle membrane. In terms of biological role, required for a subset of Wnt-dependent developmental processes, in particular, eye and pronephros development. Regulates the secretion of wnt4, which is required for eye development. The sequence is that of Protein wntless homolog A (wls-a) from Xenopus laevis (African clawed frog).